A 423-amino-acid chain; its full sequence is Tyrosine--tRNA ligase (423 aa).

Tyr-35 contributes to the L-tyrosine binding site. Residues 40–49 carry the 'HIGH' region motif; that stretch reads PTAASLHVGH. L-tyrosine is bound by residues Tyr-170 and Gln-174. A 'KMSKS' region motif is present at residues 231-235; it reads KFGKS. Lys-234 contacts ATP. An S4 RNA-binding domain is found at 353–419; that stretch reads GPLVDLLVEV…GKKNLAAVEV (67 aa).

Belongs to the class-I aminoacyl-tRNA synthetase family. TyrS type 1 subfamily. Homodimer.

The protein localises to the cytoplasm. The enzyme catalyses tRNA(Tyr) + L-tyrosine + ATP = L-tyrosyl-tRNA(Tyr) + AMP + diphosphate + H(+). Its function is as follows. Catalyzes the attachment of tyrosine to tRNA(Tyr) in a two-step reaction: tyrosine is first activated by ATP to form Tyr-AMP and then transferred to the acceptor end of tRNA(Tyr). The polypeptide is Tyrosine--tRNA ligase (Streptomyces griseus subsp. griseus (strain JCM 4626 / CBS 651.72 / NBRC 13350 / KCC S-0626 / ISP 5235)).